The following is an 81-amino-acid chain: 2,3-bisphosphoglycerate-independent phosphoglycerate mutase (81 aa).

Ser14 serves as the catalytic Phosphoserine intermediate. Ser14 provides a ligand contact to Mn(2+). His75 contacts substrate.

This sequence belongs to the BPG-independent phosphoglycerate mutase family. As to quaternary structure, monomer. It depends on Mn(2+) as a cofactor.

It carries out the reaction (2R)-2-phosphoglycerate = (2R)-3-phosphoglycerate. Its pathway is carbohydrate degradation; glycolysis; pyruvate from D-glyceraldehyde 3-phosphate: step 3/5. Its function is as follows. Catalyzes the interconversion of 2-phosphoglycerate and 3-phosphoglycerate. This Tomato big bud phytoplasma protein is 2,3-bisphosphoglycerate-independent phosphoglycerate mutase (gpmI).